A 162-amino-acid polypeptide reads, in one-letter code: Heat shock protein beta-6 (162 aa).

The segment at 1-72 (MEIPVPVQPS…PTAQVSTDSG (72 aa)) is involved in stabilization of the HSPB1:HSBP6 heterodimer. Residue serine 16 is modified to Phosphoserine. Residues 56–162 (RAPSVALPTA…AQLPSPPAAK (107 aa)) form the sHSP domain. Position 66 is a deamidated glutamine (glutamine 66). Phosphoserine is present on serine 157.

The protein belongs to the small heat shock protein (HSP20) family. As to quaternary structure, homodimer. Small heat shock proteins form high molecular mass oligomers containing variable number of monomers; these oligomers display a very flexible quaternary structure easily exchanging their subunits. Heterooligomer with HSPB1; formed through oligomerization of HSPB1:HSBP6 dimers; subunit exchange leads to formation of at least two different heterooligomeric complexes, differing in variable quantities of HSPB1 and HSPB6 homodimers in addition to HSPB1:HSPB6 heterodimers. Heterooligomer with CRYAB; large heterooligomers consist of CRYAB homodimers and HSPB5:HSPB6 heterodimers but lacking HSPB6 homodimers. Interacts with BAG3. Interacts (phosphorylated) with YWHAZ. Interacts with PDE4A and PDE4D; required for maintenance of the non-phosphorylated state of HSPB6 under basal conditions. Interacts with KDR. Interacts with PRKD1. In terms of processing, phosphorylated at Ser-16 by PKA and probably PKD1K; required to protect cardiomyocytes from apoptosis.

It localises to the cytoplasm. It is found in the nucleus. Its subcellular location is the secreted. Its function is as follows. Small heat shock protein which functions as a molecular chaperone probably maintaining denatured proteins in a folding-competent state. Seems to have versatile functions in various biological processes. Plays a role in regulating muscle function such as smooth muscle vasorelaxation and cardiac myocyte contractility. May regulate myocardial angiogenesis implicating KDR. Overexpression mediates cardioprotection and angiogenesis after induced damage. Stabilizes monomeric YWHAZ thereby supporting YWHAZ chaperone-like activity. The protein is Heat shock protein beta-6 (Hspb6) of Mus musculus (Mouse).